We begin with the raw amino-acid sequence, 319 residues long: Dehydrogenase/reductase SDR family member 9 (319 aa).

An N-terminal signal peptide occupies residues 1–17 (MLFWLLVLLILCGFLWN). Residues 34-58 (ITGC…HVIA) and Asp-83 contribute to the NAD(+) site. Ser-164 is a binding site for substrate. The Proton acceptor role is filled by Tyr-176. Residue Lys-180 coordinates NAD(+).

It belongs to the short-chain dehydrogenases/reductases (SDR) family. Homotetramer.

The protein resides in the microsome membrane. It localises to the endoplasmic reticulum membrane. The enzyme catalyses 3beta-hydroxy-5alpha-pregnane-20-one + NAD(+) = 5alpha-pregnane-3,20-dione + NADH + H(+). It carries out the reaction 17beta-hydroxy-5alpha-androstan-3-one + NAD(+) = 5alpha-androstan-3,17-dione + NADH + H(+). It catalyses the reaction androsterone + NAD(+) = 5alpha-androstan-3,17-dione + NADH + H(+). The catalysed reaction is 5alpha-androstane-3alpha,17beta-diol + NAD(+) = 17beta-hydroxy-5alpha-androstan-3-one + NADH + H(+). The enzyme catalyses all-trans-retinol + NAD(+) = all-trans-retinal + NADH + H(+). It carries out the reaction 3alpha-hydroxy-5alpha-pregnan-20-one + NAD(+) = 5alpha-pregnane-3,20-dione + NADH + H(+). Functionally, 3-alpha-hydroxysteroid dehydrogenase that converts 3-alpha-tetrahydroprogesterone (allopregnanolone) to dihydroxyprogesterone and 3-alpha-androstanediol to dihydroxyprogesterone. Also plays a role in the biosynthesis of retinoic acid from retinaldehyde. Can utilize both NADH and NADPH. This chain is Dehydrogenase/reductase SDR family member 9 (DHRS9), found in Bos taurus (Bovine).